We begin with the raw amino-acid sequence, 373 residues long: Chaperone protein DnaJ (373 aa).

A J domain is found at 4–69 (SYYEILEITQ…EKRAIYDRYG (66 aa)). The segment at 135–212 (GCKKNIDFTY…CKGLGYNESK (78 aa)) adopts a CR-type zinc-finger fold. Zn(2+) contacts are provided by C148, C151, C164, C167, C186, C189, C200, and C203. 4 CXXCXGXG motif repeats span residues 148–155 (CKTCNGTG), 164–171 (CPKCQGRG), 186–193 (CPDCQGIG), and 200–207 (CSDCKGLG).

It belongs to the DnaJ family. In terms of assembly, homodimer. It depends on Zn(2+) as a cofactor.

The protein resides in the cytoplasm. In terms of biological role, participates actively in the response to hyperosmotic and heat shock by preventing the aggregation of stress-denatured proteins and by disaggregating proteins, also in an autonomous, DnaK-independent fashion. Unfolded proteins bind initially to DnaJ; upon interaction with the DnaJ-bound protein, DnaK hydrolyzes its bound ATP, resulting in the formation of a stable complex. GrpE releases ADP from DnaK; ATP binding to DnaK triggers the release of the substrate protein, thus completing the reaction cycle. Several rounds of ATP-dependent interactions between DnaJ, DnaK and GrpE are required for fully efficient folding. Also involved, together with DnaK and GrpE, in the DNA replication of plasmids through activation of initiation proteins. This is Chaperone protein DnaJ from Campylobacter jejuni (strain RM1221).